The chain runs to 111 residues: Ribonuclease P protein component (111 aa).

Belongs to the RnpA family. In terms of assembly, consists of a catalytic RNA component (M1 or rnpB) and a protein subunit.

The enzyme catalyses Endonucleolytic cleavage of RNA, removing 5'-extranucleotides from tRNA precursor.. Functionally, RNaseP catalyzes the removal of the 5'-leader sequence from pre-tRNA to produce the mature 5'-terminus. It can also cleave other RNA substrates such as 4.5S RNA. The protein component plays an auxiliary but essential role in vivo by binding to the 5'-leader sequence and broadening the substrate specificity of the ribozyme. This Fusobacterium nucleatum subsp. nucleatum (strain ATCC 25586 / DSM 15643 / BCRC 10681 / CIP 101130 / JCM 8532 / KCTC 2640 / LMG 13131 / VPI 4355) protein is Ribonuclease P protein component.